The primary structure comprises 69 residues: Conotoxin Eb6.19 (69 aa).

Positions Val-1–Ala-17 are cleaved as a signal peptide. The propeptide occupies Glu-18 to Arg-41. Intrachain disulfides connect Cys-43–Cys-57, Cys-50–Cys-61, and Cys-56–Cys-68.

It belongs to the conotoxin O1 superfamily. In terms of tissue distribution, expressed by the venom duct.

The protein localises to the secreted. The chain is Conotoxin Eb6.19 (E1) from Conus ebraeus (Hebrew cone).